A 799-amino-acid chain; its full sequence is Rho GTPase-activating protein gacI (799 aa).

The region spanning 226–451 (IKLEEVFARE…LLVEHVLTIF (226 aa)) is the Rho-GAP domain. Residues 472 to 520 (RSQSDISSQTKPLPSLPTSPQNRSAIITGDSSSPSLNTPPVKSSLNSSD) show a composition bias toward polar residues. Disordered regions lie at residues 472-572 (RSQS…PTSN) and 741-799 (EKQQ…LSNQ). A compositionally biased stretch (low complexity) spans 525–549 (DNGSNNNNNNNTTNTITNNGIADTA). Pro residues predominate over residues 550 to 568 (TPPPPTTPTAPTTPPPPTT). 2 stretches are compositionally biased toward low complexity: residues 743–752 (QQQQQQQQTN) and 759–791 (ISSNTNTSISGDNSENGDSLNSSTSNQSPLNSS).

It is found in the cytoplasm. Functionally, rho GTPase-activating protein involved in the signal transduction pathway. The polypeptide is Rho GTPase-activating protein gacI (gacI) (Dictyostelium discoideum (Social amoeba)).